The sequence spans 694 residues: ATP-binding cassette sub-family G member 8 (694 aa).

Over 1–437 the chain is Cytoplasmic; sequence MAEKTKEETQ…ISNDFRDLPT (437 aa). The ABC transporter domain maps to 91-335; sequence AQFKLPWRSR…FTSIGYPCPR (245 aa). The ABC transmembrane type-2 domain occupies 436 to 684; sequence PTLFIHGAEA…FLSLYYLSLK (249 aa). The chain crosses the membrane as a helical span at residues 438–458; sequence LFIHGAEACLMSLIIGFLYYG. The Extracellular segment spans residues 459 to 468; the sequence is HADKPLSFMD. Residues 469–489 form a helical membrane-spanning segment; the sequence is MAALLFMIGALIPFNVILDVV. Residues 490 to 518 lie on the Cytoplasmic side of the membrane; the sequence is SKCHSERSLLYYELEDGLYTAGPYFFAKV. A helical membrane pass occupies residues 519-539; sequence LGELPEHCAYVIIYGMPIYWL. Topologically, residues 540–548 are extracellular; the sequence is TNLRPGPEL. Residues 549 to 569 traverse the membrane as a helical segment; the sequence is FLLHFMLLWLVVFCCRTMALA. At 570 to 576 the chain is on the cytoplasmic side; the sequence is ASAMLPT. A helical transmembrane segment spans residues 577-597; it reads FHMSSFCCNALYNSFYLTAGF. The Extracellular segment spans residues 598–660; sequence MINLNNLWIV…VTAMDLNSHP (63 aa). N-linked (GlcNAc...) asparagine glycosylation is present at Asn640. Residues 661–681 traverse the membrane as a helical segment; it reads LYAIYLIVIGISCGFLSLYYL. At 682 to 694 the chain is on the cytoplasmic side; that stretch reads SLKFIKQKSIQDW.

Belongs to the ABC transporter superfamily. ABCG family. Eye pigment precursor importer (TC 3.A.1.204) subfamily. In terms of assembly, heterodimer with ABCG8. The cofactor is Mg(2+). In terms of processing, N-glycosylated. N-glycosylation is important for efficient export out of the endoplasmic reticulum. As to expression, highest expression in liver, with lower levels in small intestine and colon.

It is found in the cell membrane. The protein localises to the apical cell membrane. It catalyses the reaction cholesterol(in) + ATP + H2O = cholesterol(out) + ADP + phosphate + H(+). The catalysed reaction is sitosterol(in) + ATP + H2O = sitosterol(out) + ADP + phosphate + H(+). Functionally, ABCG5 and ABCG8 form an obligate heterodimer that mediates Mg(2+)- and ATP-dependent sterol transport across the cell membrane. Plays an essential role in the selective transport of the dietary cholesterol in and out of the enterocytes and in the selective sterol excretion by the liver into bile. Required for normal sterol homeostasis. The heterodimer with ABCG5 has ATPase activity. In Rattus norvegicus (Rat), this protein is ATP-binding cassette sub-family G member 8.